The primary structure comprises 116 residues: ATP-dependent Clp protease adapter protein ClpS (116 aa).

The segment covering 1 to 11 (MRRFNTIMQGK) has biased composition (polar residues). The segment at 1–23 (MRRFNTIMQGKTNGGNGPESGTV) is disordered.

It belongs to the ClpS family. Binds to the N-terminal domain of the chaperone ClpA.

Involved in the modulation of the specificity of the ClpAP-mediated ATP-dependent protein degradation. In Brucella melitensis biotype 2 (strain ATCC 23457), this protein is ATP-dependent Clp protease adapter protein ClpS.